The chain runs to 387 residues: Phosphoglycerate kinase (387 aa).

Residues 21–23 (DLN), R36, 59–62 (HLGR), R113, and R146 each bind substrate. ATP-binding positions include K197, E314, and 340 to 343 (GGDT).

It belongs to the phosphoglycerate kinase family. In terms of assembly, monomer.

It is found in the cytoplasm. The enzyme catalyses (2R)-3-phosphoglycerate + ATP = (2R)-3-phospho-glyceroyl phosphate + ADP. It functions in the pathway carbohydrate degradation; glycolysis; pyruvate from D-glyceraldehyde 3-phosphate: step 2/5. This is Phosphoglycerate kinase from Cronobacter sakazakii (strain ATCC BAA-894) (Enterobacter sakazakii).